The sequence spans 137 residues: Small ribosomal subunit protein bS6 (137 aa).

The tract at residues 96-137 is disordered; it reads ITEASPMAKAKDERDTRRSSEERAPRAEAAEEVEESAENTAE. Basic and acidic residues predominate over residues 104–124; it reads KAKDERDTRRSSEERAPRAEA. Acidic residues predominate over residues 125-137; that stretch reads AEEVEESAENTAE.

This sequence belongs to the bacterial ribosomal protein bS6 family.

Binds together with bS18 to 16S ribosomal RNA. The sequence is that of Small ribosomal subunit protein bS6 from Shewanella halifaxensis (strain HAW-EB4).